A 605-amino-acid chain; its full sequence is Adaptin medium chain homolog APM2 (605 aa).

A disordered region spans residues 150 to 196 (EEWSPGEESSSSSGSDSDSEYSNTNKRKDKKKKRKKKKGTKGKSVGK). Over residues 155–171 (GEESSSSSGSDSDSEYS) the composition is skewed to low complexity. The span at 174 to 196 (NKRKDKKKKRKKKKGTKGKSVGK) shows a compositional bias: basic residues. The 336-residue stretch at 269–604 (KNEFFLDVIE…TVSDEEYAYI (336 aa)) folds into the MHD domain.

It belongs to the adaptor complexes medium subunit family. Component of the AP-1R complex composed of at least APM2, APL4 and APS1. Interacts with MIL1. Interacts with APL2.

The protein resides in the golgi apparatus membrane. It localises to the early endosome membrane. The protein localises to the cytoplasmic vesicle. It is found in the clathrin-coated vesicle membrane. Its function is as follows. Component of the AP-1-related (AP-1R) complex, an adapter protein complex that mediates of cargo protein sorting in clathrin-coated vesicles. AP-1R has a specific role in SNARE SNC1 sorting. In contrast to the APM1-containing AP-1 complex, AP-1R is incapable of sorting CHS3. The sequence is that of Adaptin medium chain homolog APM2 (APM2) from Saccharomyces cerevisiae (strain ATCC 204508 / S288c) (Baker's yeast).